Consider the following 139-residue polypeptide: MATMQCDVVSVKESIYSGQVTMLIAKGAGGELGILPGHAPLVTLLQPGPIRVQLENGTEEIVYVSGGVLEVQPHVVTVLADTAIRADNLDEAAILEARKNAEQLLANQKSDLDSAAALASLSEISGQLETIRKIKNRAL.

It belongs to the ATPase epsilon chain family. As to quaternary structure, F-type ATPases have 2 components, CF(1) - the catalytic core - and CF(0) - the membrane proton channel. CF(1) has five subunits: alpha(3), beta(3), gamma(1), delta(1), epsilon(1). CF(0) has three main subunits: a, b and c.

The protein localises to the cell inner membrane. In terms of biological role, produces ATP from ADP in the presence of a proton gradient across the membrane. The polypeptide is ATP synthase epsilon chain (Acinetobacter baylyi (strain ATCC 33305 / BD413 / ADP1)).